A 298-amino-acid polypeptide reads, in one-letter code: N-acetylmuramic acid 6-phosphate etherase (298 aa).

The region spanning 55–218 (IHAQVSGGGR…STGLMIKSGK (164 aa)) is the SIS domain. Glu-83 functions as the Proton donor in the catalytic mechanism. Glu-114 is a catalytic residue.

Belongs to the GCKR-like family. MurNAc-6-P etherase subfamily. In terms of assembly, homodimer.

The catalysed reaction is N-acetyl-D-muramate 6-phosphate + H2O = N-acetyl-D-glucosamine 6-phosphate + (R)-lactate. The protein operates within amino-sugar metabolism; 1,6-anhydro-N-acetylmuramate degradation. It participates in amino-sugar metabolism; N-acetylmuramate degradation. Its pathway is cell wall biogenesis; peptidoglycan recycling. Its function is as follows. Specifically catalyzes the cleavage of the D-lactyl ether substituent of MurNAc 6-phosphate, producing GlcNAc 6-phosphate and D-lactate. Together with AnmK, is also required for the utilization of anhydro-N-acetylmuramic acid (anhMurNAc) either imported from the medium or derived from its own cell wall murein, and thus plays a role in cell wall recycling. The sequence is that of N-acetylmuramic acid 6-phosphate etherase from Escherichia coli O8 (strain IAI1).